The primary structure comprises 317 residues: Glucokinase (317 aa).

Belongs to the ROK (NagC/XylR) family. Homodimer. Requires a divalent metal cation as cofactor.

It catalyses the reaction D-glucose + ATP = D-glucose 6-phosphate + ADP + H(+). Functionally, catalyzes the phosphorylation of D-glucose to D-glucose 6-phosphate using ATP as the phosphate donor. Can also phosphorylate 2-deoxyglucose, with lower efficiency. ITP can also serve as a phosphoryl donor. The protein is Glucokinase of Thermotoga maritima (strain ATCC 43589 / DSM 3109 / JCM 10099 / NBRC 100826 / MSB8).